The chain runs to 261 residues: Lipase LipV (261 aa).

S87 serves as the catalytic Nucleophile. Active-site charge relay system residues include D217 and H240.

The protein belongs to the AB hydrolase superfamily.

The catalysed reaction is a carboxylic ester + H2O = an alcohol + a carboxylate + H(+). It catalyses the reaction a tetradecanoate ester + H2O = an aliphatic alcohol + tetradecanoate + H(+). It carries out the reaction decanoate ester + H2O = decanoate + an aliphatic alcohol + H(+). The enzyme catalyses an octanoate ester + H2O = an aliphatic alcohol + octanoate + H(+). The catalysed reaction is a dodecanoate ester + H2O = an aliphatic alcohol + dodecanoate + H(+). It catalyses the reaction a butanoate ester + H2O = an aliphatic alcohol + butanoate + H(+). It carries out the reaction hexadecanoate ester + H2O = an aliphatic alcohol + hexadecanoate + H(+). The enzyme catalyses octadecanoate ester + H2O = an aliphatic alcohol + octadecanoate + H(+). Its activity is regulated as follows. Is inhibited by tetrahydrolipstatin, a specific lipase inhibitor and RHC 80267, a diacylglycerol lipase inhibitor, but not by phenylglyoxal and iodoacetate. Lipase that displays broad substrate specificity and preferentially hydrolyzes p-nitrophenyl myristate in vitro. Also shows significant activity with pNP-butyrate (68%), pNP-octanoate (82%), pNP-decanoate (90%), and pNP-laurate (74%). Is probably involved in lipid catabolism. Is active at low pH, and might play some important role in mycobacterial biology in macrophages where the bacteria encounters acidic stress. The sequence is that of Lipase LipV from Mycobacterium tuberculosis (strain ATCC 25618 / H37Rv).